A 468-amino-acid polypeptide reads, in one-letter code: Citrate synthase, mitochondrial (468 aa).

The transit peptide at Met1–Ser30 directs the protein to the mitochondrion. Residues His303 and His349 contribute to the active site. Position 358 (Arg358) interacts with oxaloacetate. Asp404 is an active-site residue. Oxaloacetate is bound by residues Arg430 and Arg450.

Belongs to the citrate synthase family. As to quaternary structure, homodimer.

It is found in the mitochondrion matrix. The enzyme catalyses oxaloacetate + acetyl-CoA + H2O = citrate + CoA + H(+). It functions in the pathway carbohydrate metabolism; tricarboxylic acid cycle; isocitrate from oxaloacetate: step 1/2. Key enzyme of the Krebs tricarboxylic acid cycle which catalyzes the synthesis of citrate from acetyl coenzyme A and oxaloacetate. The sequence is that of Citrate synthase, mitochondrial (cs) from Xenopus laevis (African clawed frog).